The chain runs to 107 residues: Probable antitoxin TacA (107 aa).

It belongs to the TacA antitoxin family. Forms a complex with cognate antitoxin TacT.

In terms of biological role, probable antitoxin component of a type II toxin-antitoxin (TA) system. Should neutralize cognate toxin TacT (y4aS). This is Probable antitoxin TacA from Sinorhizobium fredii (strain NBRC 101917 / NGR234).